The following is a 155-amino-acid chain: SsrA-binding protein (155 aa).

It belongs to the SmpB family.

It is found in the cytoplasm. Its function is as follows. Required for rescue of stalled ribosomes mediated by trans-translation. Binds to transfer-messenger RNA (tmRNA), required for stable association of tmRNA with ribosomes. tmRNA and SmpB together mimic tRNA shape, replacing the anticodon stem-loop with SmpB. tmRNA is encoded by the ssrA gene; the 2 termini fold to resemble tRNA(Ala) and it encodes a 'tag peptide', a short internal open reading frame. During trans-translation Ala-aminoacylated tmRNA acts like a tRNA, entering the A-site of stalled ribosomes, displacing the stalled mRNA. The ribosome then switches to translate the ORF on the tmRNA; the nascent peptide is terminated with the 'tag peptide' encoded by the tmRNA and targeted for degradation. The ribosome is freed to recommence translation, which seems to be the essential function of trans-translation. This is SsrA-binding protein from Geobacillus thermodenitrificans (strain NG80-2).